We begin with the raw amino-acid sequence, 299 residues long: Secreted LysM effector ldpB (299 aa).

The signal sequence occupies residues 1-19 (MGLTSILIAQVLFLGAANS). LysM domains lie at 46-91 (WVND…SYCV), 135-182 (AFYK…YVCI), and 211-258 (KYHK…YVCV). Asn-154 carries N-linked (GlcNAc...) asparagine glycosylation. Positions 266–283 (ATATPQPTPQPQQSSSPD) are enriched in low complexity. The segment at 266-288 (ATATPQPTPQPQQSSSPDQPMPQ) is disordered.

The protein belongs to the secreted LysM effector family.

It localises to the secreted. Its subcellular location is the cell wall. It is found in the extracellular space. The protein localises to the extracellular matrix. Functionally, cell wall chitin of A.fumigatus recruits lung eosinophils during infection and ldpB might have a role in sequestration of chitin and act as triggers of host immunity to dampen host defense. The chain is Secreted LysM effector ldpB from Aspergillus fumigatus (strain ATCC MYA-4609 / CBS 101355 / FGSC A1100 / Af293) (Neosartorya fumigata).